Here is a 261-residue protein sequence, read N- to C-terminus: Ribonuclease HII (261 aa).

The RNase H type-2 domain occupies 71 to 259 (KYIAGVDEVG…VKESKLHFDS (189 aa)). D77, E78, and D169 together coordinate a divalent metal cation.

The protein belongs to the RNase HII family. It depends on Mn(2+) as a cofactor. Requires Mg(2+) as cofactor.

It localises to the cytoplasm. The catalysed reaction is Endonucleolytic cleavage to 5'-phosphomonoester.. Endonuclease that specifically degrades the RNA of RNA-DNA hybrids. This Listeria monocytogenes serovar 1/2a (strain ATCC BAA-679 / EGD-e) protein is Ribonuclease HII.